The following is a 426-amino-acid chain: Amino acid transporter AVT1H (426 aa).

11 helical membrane-spanning segments follow: residues S34–M54, P55–L75, L110–S130, H148–I168, I182–I202, I215–L235, V248–A268, I292–L312, L340–L360, S363–W383, and A392–S412.

It belongs to the amino acid/polyamine transporter 2 family. Amino acid/auxin permease (AAAP) (TC 2.A.18.5) subfamily.

It localises to the membrane. This chain is Amino acid transporter AVT1H, found in Arabidopsis thaliana (Mouse-ear cress).